The following is a 185-amino-acid chain: ATP synthase subunit b (185 aa).

The helical transmembrane segment at 28–48 threads the bilayer; that stretch reads VVLVGFAVLMYIVVKFVVPMF.

The protein belongs to the ATPase B chain family. F-type ATPases have 2 components, F(1) - the catalytic core - and F(0) - the membrane proton channel. F(1) has five subunits: alpha(3), beta(3), gamma(1), delta(1), epsilon(1). F(0) has three main subunits: a(1), b(2) and c(10-14). The alpha and beta chains form an alternating ring which encloses part of the gamma chain. F(1) is attached to F(0) by a central stalk formed by the gamma and epsilon chains, while a peripheral stalk is formed by the delta and b chains.

It localises to the cell membrane. F(1)F(0) ATP synthase produces ATP from ADP in the presence of a proton or sodium gradient. F-type ATPases consist of two structural domains, F(1) containing the extramembraneous catalytic core and F(0) containing the membrane proton channel, linked together by a central stalk and a peripheral stalk. During catalysis, ATP synthesis in the catalytic domain of F(1) is coupled via a rotary mechanism of the central stalk subunits to proton translocation. Functionally, component of the F(0) channel, it forms part of the peripheral stalk, linking F(1) to F(0). The sequence is that of ATP synthase subunit b from Paenarthrobacter aurescens (strain TC1).